We begin with the raw amino-acid sequence, 512 residues long: Serine--tRNA ligase, cytoplasmic (512 aa).

Residue Met-1 is modified to N-acetylmethionine. An interaction with tRNA region spans residues 9–61 (RVDKGGDPALIRETQEKRFKDPGLVDQLVKADSEWRRCRFRADNLNKLKNLCS). Residue Ser-241 is modified to Phosphoserine. Positions 271 and 302 each coordinate L-serine. ATP is bound by residues 302–304 (RQE) and 318–321 (VHQF). An N6-acetyllysine modification is found at Lys-323. Glu-325 is an L-serine binding site. 391–394 (ELVS) lines the ATP pocket. Residues Asn-427 and Thr-429 each coordinate L-serine. The tract at residues 472–512 (KPAPIDQEPSKKQKKQHEGSKKKAKEVTLESQLQNMEVTEA) is disordered. The span at 479–499 (EPSKKQKKQHEGSKKKAKEVT) shows a compositional bias: basic and acidic residues. The short motif at 482–494 (KKQKKQHEGSKKK) is the Nuclear localization signal element. Residues 500 to 512 (LESQLQNMEVTEA) are compositionally biased toward polar residues.

The protein belongs to the class-II aminoacyl-tRNA synthetase family. Type-1 seryl-tRNA synthetase subfamily. As to quaternary structure, homodimer. The tRNA molecule may bind across the dimer. Interacts with SIRT2. Interacts with METTL6; interaction is required for the tRNA N(3)-methylcytidine methyltransferase activity of METTL6.

The protein resides in the cytoplasm. The protein localises to the nucleus. It catalyses the reaction tRNA(Ser) + L-serine + ATP = L-seryl-tRNA(Ser) + AMP + diphosphate + H(+). The enzyme catalyses tRNA(Sec) + L-serine + ATP = L-seryl-tRNA(Sec) + AMP + diphosphate + H(+). It participates in aminoacyl-tRNA biosynthesis; selenocysteinyl-tRNA(Sec) biosynthesis; L-seryl-tRNA(Sec) from L-serine and tRNA(Sec): step 1/1. Catalyzes the attachment of serine to tRNA(Ser) in a two-step reaction: serine is first activated by ATP to form Ser-AMP and then transferred to the acceptor end of tRNA(Ser). Is probably also able to aminoacylate tRNA(Sec) with serine, to form the misacylated tRNA L-seryl-tRNA(Sec), which will be further converted into selenocysteinyl-tRNA(Sec). In the nucleus, binds to the VEGFA core promoter and prevents MYC binding and transcriptional activation by MYC. Recruits SIRT2 to the VEGFA promoter, promoting deacetylation of histone H4 at 'Lys-16' (H4K16). Thereby, inhibits the production of VEGFA and sprouting angiogenesis mediated by VEGFA. This chain is Serine--tRNA ligase, cytoplasmic (SARS1), found in Cricetulus griseus (Chinese hamster).